The chain runs to 1220 residues: Protein patched homolog 1 (1220 aa).

The segment at 1–27 is disordered; that stretch reads MASDPRDPGPAGGVFGDLPPSYTRSPP. The Cytoplasmic segment spans residues 1 to 84; that stretch reads MASDPRDPGP…GCHIQRHCGK (84 aa). A helical membrane pass occupies residues 85–105; sequence VLFIGLLVFGALSVGLRVAAI. The Extracellular portion of the chain corresponds to 106 to 419; it reads ETDIEKLWVE…LNDIMKSFSD (314 aa). N-linked (GlcNAc...) asparagine glycosylation is present at asparagine 397. The chain crosses the membrane as a helical span at residues 420-440; the sequence is VSVIRVAGGYLLMLAYACVTM. One can recognise an SSD domain in the interval 421 to 579; the sequence is SVIRVAGGYL…LLIFPAILSL (159 aa). The Cytoplasmic portion of the chain corresponds to 441 to 449; sequence LRWDCAKSQ. Residues 450 to 470 form a helical membrane-spanning segment; sequence GAVGLAGVLLVALSVAAGLGL. Residues 471–484 are Extracellular-facing; the sequence is CSLLGLSFNAATTQ. Residues 485 to 505 traverse the membrane as a helical segment; the sequence is VLPSLALGIGVDDMFLLGHSF. Residues 506-528 lie on the Cytoplasmic side of the membrane; sequence TETRSNIPFKERTGDCLRRTGTS. A helical membrane pass occupies residues 529 to 549; that stretch reads VALTSVNNMIAFFMAALVPIP. Residues 550–558 lie on the Extracellular side of the membrane; that stretch reads ALRAFSLQA. A helical transmembrane segment spans residues 559–579; it reads AVVVVFNFAMALLIFPAILSL. The Cytoplasmic segment spans residues 580-739; it reads DLHRREDKRL…APLLLKPETK (160 aa). The helical transmembrane segment at 740–760 threads the bilayer; sequence TVVVVVFVALLSLSLYGTTMV. Residues 761-1016 are Extracellular-facing; sequence HDGLYLTDIV…WEQYIGLRHW (256 aa). Residues asparagine 865 and asparagine 888 are each glycosylated (N-linked (GlcNAc...) asparagine). The helical transmembrane segment at 1017 to 1037 threads the bilayer; it reads FLLSISVVLACTFLVCAILLL. The Cytoplasmic segment spans residues 1038–1044; it reads NPWTAGV. The helical transmembrane segment at 1045–1065 threads the bilayer; that stretch reads IVFILPMMTVELFGIMGLIGI. Residues 1066 to 1072 are Extracellular-facing; that stretch reads KLSAIPV. The chain crosses the membrane as a helical span at residues 1073-1093; the sequence is VILIASVGIGVEFTVHIALGF. Topologically, residues 1094–1110 are cytoplasmic; that stretch reads LTAIGDRNTRSAVAMEH. Residues 1111–1131 traverse the membrane as a helical segment; sequence MFAPVIDGAISTLLGVLMLAG. The Extracellular portion of the chain corresponds to 1132 to 1143; it reads SEFDFIMRYFFA. A helical transmembrane segment spans residues 1144-1164; it reads VLAILTLLGILNGLVLLPVLL. Topologically, residues 1165 to 1220 are cytoplasmic; that stretch reads SLMGPPAEVVPANNANHLQSPSPEPMPPPMNHHGYYAGHIPKASHQAFSETSDSEY.

The protein belongs to the patched family. Post-translationally, glycosylation is necessary for SHH binding. Detected in embryonic presomitic mesoderm, neuroectoderm, tissue surrounding the notochord, ventral neural tube.

The protein localises to the membrane. Its function is as follows. Acts as a receptor for sonic hedgehog (SHH), indian hedgehog (IHH) and desert hedgehog (DHH). Associates with the smoothened protein (SMO) to transduce the hedgehog's proteins signal. The polypeptide is Protein patched homolog 1 (ptch1) (Danio rerio (Zebrafish)).